We begin with the raw amino-acid sequence, 225 residues long: Endo-1,4-beta-xylanase (225 aa).

Positions 1-31 are cleaved as a signal peptide; the sequence is MVGFTPVALAALAATGALAFPAGNATELEKR. Gln-32 is modified (pyrrolidone carboxylic acid). The region spanning 32–222 is the GH11 domain; it reads QTTPNSEGWH…SSGYARITVA (191 aa). Glu-117 (nucleophile) is an active-site residue. Cys-141 and Cys-185 form a disulfide bridge. The active-site Proton donor is Glu-209.

It carries out the reaction Endohydrolysis of (1-&gt;4)-beta-D-xylosidic linkages in xylans.. It participates in glycan degradation; xylan degradation. This chain is Endo-1,4-beta-xylanase (XYNA), found in Thermomyces lanuginosus (Humicola lanuginosa).